The primary structure comprises 270 residues: Tetraspanin-14 (270 aa).

At 1–17 (MHYYRYSNAKVSCWYKY) the chain is on the cytoplasmic side. Residues 18 to 38 (LLFSYNIIFWLAGVVFLGVGL) form a helical membrane-spanning segment. The Extracellular segment spans residues 39–61 (WAWSEKGVLSDLTKVTRMHGIDP). Residues 62–82 (VVLVLMVGVVMFTLGFAGCVG) form a helical membrane-spanning segment. Topologically, residues 83–92 (ALRENICLLN) are cytoplasmic. Residues 93-113 (FFCGTIVLIFFLELAVAVLAF) form a helical membrane-spanning segment. Topologically, residues 114-232 (LFQDWVRDRF…QALESWLPRN (119 aa)) are extracellular. Residues 114-232 (LFQDWVRDRF…QALESWLPRN (119 aa)) form a necessary and sufficient for interaction with ADAM10 region. Disulfide bonds link C153–C221, C154–C186, C170–C180, and C187–C200. Residue N169 is glycosylated (N-linked (GlcNAc...) asparagine). A helical transmembrane segment spans residues 233 to 253 (IYIVAGVFIAISLLQIFGIFL). Topologically, residues 254-270 (ARTLISDIEAVKAGHHF) are cytoplasmic.

Belongs to the tetraspanin (TM4SF) family. Interacts with ADAM10; the interaction promotes ADAM10 maturation and cell surface expression.

The protein localises to the cell membrane. In terms of biological role, part of TspanC8 subgroup, composed of 6 members that interact with the transmembrane metalloprotease ADAM10. This interaction is required for ADAM10 exit from the endoplasmic reticulum and for enzymatic maturation and trafficking to the cell surface as well as substrate specificity. Different TspanC8/ADAM10 complexes have distinct substrates. Negatively regulates ADAM10-mediated cleavage of GP6. Promotes ADAM10-mediated cleavage of CDH5. This is Tetraspanin-14 from Homo sapiens (Human).